The chain runs to 71 residues: Small ribosomal subunit protein bS21 (71 aa).

The segment covering 50–59 has biased composition (basic residues); the sequence is AAAVKRHAKK. Residues 50 to 71 form a disordered region; it reads AAAVKRHAKKVQREQRRAVRLY. The segment covering 60–71 has biased composition (basic and acidic residues); the sequence is VQREQRRAVRLY.

It belongs to the bacterial ribosomal protein bS21 family.

The protein is Small ribosomal subunit protein bS21 of Pseudomonas entomophila (strain L48).